The sequence spans 407 residues: Eukaryotic initiation factor 4A-II (407 aa).

The segment at 1-23 (MSGGSADYSRDHGGPEGMEPDGV) is disordered. Positions 33 to 61 (DNFDDMNLKESLLRGIYAYGFEKPSAIQQ) match the Q motif motif. The region spanning 64-235 (IIPCIKGYDV…KKFMREPIRI (172 aa)) is the Helicase ATP-binding domain. An ATP-binding site is contributed by 77–84 (AQSGTGKT). The DEAD box signature appears at 183–186 (DEAD). A Helicase C-terminal domain is found at 246-407 (GIKQFYINVE…EMPMNVADLI (162 aa)).

It belongs to the DEAD box helicase family. eIF4A subfamily. In terms of assembly, eIF4F is a multi-subunit complex, the composition of which varies with external and internal environmental conditions. It is composed of at least EIF4A, EIF4E and EIF4G1/EIFFG3. Interacts with EIF4E.

The catalysed reaction is ATP + H2O = ADP + phosphate + H(+). ATP-dependent RNA helicase which is a subunit of the eIF4F complex involved in cap recognition and is required for mRNA binding to ribosome. In the current model of translation initiation, eIF4A unwinds RNA secondary structures in the 5'-UTR of mRNAs which is necessary to allow efficient binding of the small ribosomal subunit, and subsequent scanning for the initiator codon. The chain is Eukaryotic initiation factor 4A-II (EIF4A2) from Gallus gallus (Chicken).